Here is a 317-residue protein sequence, read N- to C-terminus: 2-keto-3-deoxygluconate permease 1 (317 aa).

10 helical membrane passes run 10–30 (VPGG…TFAP), 47–67 (AAPL…VKAA), 82–102 (LLVA…EGIF), 106–126 (GVAI…ALVG), 134–154 (VGAI…IALG), 159–179 (ANIP…GMIL), 195–215 (PLLI…EMLL), 217–237 (GGLA…FFNI), 248–268 (IAGA…LAIA), and 279–299 (AAAA…TPVL).

It belongs to the KdgT transporter family.

It localises to the cell inner membrane. The catalysed reaction is 2-dehydro-3-deoxy-D-gluconate(in) + H(+)(in) = 2-dehydro-3-deoxy-D-gluconate(out) + H(+)(out). Its function is as follows. Catalyzes the proton-dependent uptake of 2-keto-3-deoxygluconate (KDG) into the cell. This chain is 2-keto-3-deoxygluconate permease 1, found in Salmonella typhi.